Here is a 341-residue protein sequence, read N- to C-terminus: Homeobox protein knotted-1-like 8 (341 aa).

Over residues 1–17 the composition is skewed to low complexity; the sequence is MESFASLAGGGSSSTTA. 3 disordered regions span residues 1–72, 121–148, and 187–207; these read MESF…AVQG, AAQQ…DQLD, and AESN…SDKQ. Residues 187–196 show a composition bias toward polar residues; the sequence is AESNCEGTGS. The ELK domain occupies 207 to 227; the sequence is QLKHQLLRKYGGSLGDLRQVF. The homeobox; TALE-type DNA-binding region spans 228 to 291; the sequence is SKRTKKGKLP…NQRKRHWKPT (64 aa).

This sequence belongs to the TALE/KNOX homeobox family.

The protein resides in the nucleus. Functionally, probable transcription factor that may be involved in shoot formation during embryogenesis. The sequence is that of Homeobox protein knotted-1-like 8 (OSH43) from Oryza sativa subsp. japonica (Rice).